The primary structure comprises 396 residues: uncharacterized protein (396 aa).

Transmembrane regions (helical) follow at residues 27–47 (LLIACLFISGSLSIVVFQICL) and 69–89 (FIVLLCMILNMVAPSSLNVTF). An HXXXXD motif motif is present at residues 117–122 (HQMYAD). 2 helical membrane passes run 123–143 (WIYLWWLSFVSNLGGNVYIIL) and 372–392 (LTPRILSYYGFFAFLILVFVM).

It belongs to the 1-acyl-sn-glycerol-3-phosphate acyltransferase family.

It localises to the membrane. This is an uncharacterized protein from Saccharomyces cerevisiae (strain ATCC 204508 / S288c) (Baker's yeast).